We begin with the raw amino-acid sequence, 427 residues long: UDP-N-acetyl-D-mannosamine dehydrogenase (427 aa).

Residues Y19, I20, D39, R44, T91, and T130 each coordinate NAD(+). Positions 155, 156, 207, 211, 214, 245, 247, and 258 each coordinate UDP-N-acetyl-alpha-D-mannosaminouronate. K207 (proton donor/acceptor) is an active-site residue. Residue C261 is the Nucleophile of the active site. Y318 and K319 together coordinate UDP-N-acetyl-alpha-D-mannosaminouronate. R326 contacts NAD(+). K404 lines the UDP-N-acetyl-alpha-D-mannosaminouronate pocket.

The protein belongs to the UDP-glucose/GDP-mannose dehydrogenase family. In terms of assembly, homotetramer; probably dimer of dimers.

It catalyses the reaction UDP-N-acetyl-alpha-D-mannosamine + 2 NAD(+) + H2O = UDP-N-acetyl-alpha-D-mannosaminouronate + 2 NADH + 3 H(+). Catalyzes the four-electron oxidation of UDP-N-acetyl-D-mannosamine (UDP-ManNAc), reducing NAD(+) and releasing UDP-N-acetylmannosaminuronic acid (UDP-ManNAcA). Cannot use NADP instead of NAD. The protein is UDP-N-acetyl-D-mannosamine dehydrogenase (wecC) of Methanococcus maripaludis (strain DSM 14266 / JCM 13030 / NBRC 101832 / S2 / LL).